Reading from the N-terminus, the 923-residue chain is Neuropilin-1a (923 aa).

The first 19 residues, 1-19 (MHCGLVLILFTGIFLIVSA), serve as a signal peptide directing secretion. Topologically, residues 20 to 856 (LKNDKCGDNI…AGNMLKTLDP (837 aa)) are extracellular. Cystine bridges form between C25–C52, C80–C102, and C145–C171. CUB domains follow at residues 25–139 (CGDN…YEIF) and 145–263 (CSRN…FTVL). N-linked (GlcNAc...) asparagine glycosylation occurs at N148. Ca(2+) contacts are provided by E193, D207, and D248. Residues C204 and C226 are joined by a disulfide bond. N259 carries an N-linked (GlcNAc...) asparagine glycan. Disulfide bonds link C273–C422 and C429–C581. F5/8 type C domains are found at residues 273–422 (CTEP…VYGC) and 429–581 (CSGM…LLGC). N520 carries N-linked (GlcNAc...) asparagine glycosylation. The segment at 587-624 (TVPPTTPAASTTPSDECDDDQANCHSGTGDGYDQTGGT) is disordered. O-linked (Xyl...) (chondroitin sulfate) serine; alternate glycosylation occurs at S612. An O-linked (Xyl...) (heparan sulfate) serine; alternate glycan is attached at S612. The region spanning 642-811 (FACDFGWAND…DNVNMADCKD (170 aa)) is the MAM domain. Residues 857–877 (ILITIIAMSALGVFLGAICGV) form a helical membrane-spanning segment. Over 878 to 923 (VLYCACSHSGMSDRNLSALENYNFELVDGVKLKKDKLNSQNSYSEA) the chain is Cytoplasmic.

It belongs to the neuropilin family.

It is found in the membrane. Its function is as follows. Receptor involved in the development of the cardiovascular system, in angiogenesis, in the formation of certain neuronal circuits and in organogenesis outside the nervous system. It mediates the chemorepulsant activity of semaphorins. Regulates angiogenesis through a VEGF-dependent pathway. The polypeptide is Neuropilin-1a (nrp1a) (Danio rerio (Zebrafish)).